We begin with the raw amino-acid sequence, 163 residues long: Large ribosomal subunit protein bL19 (163 aa).

A compositionally biased stretch (basic and acidic residues) spans isoleucine 131 to proline 150. A disordered region spans residues isoleucine 131 to lysine 163. Basic residues predominate over residues glutamine 151–lysine 163.

This sequence belongs to the bacterial ribosomal protein bL19 family.

Its function is as follows. This protein is located at the 30S-50S ribosomal subunit interface and may play a role in the structure and function of the aminoacyl-tRNA binding site. The polypeptide is Large ribosomal subunit protein bL19 (Rhodospirillum rubrum (strain ATCC 11170 / ATH 1.1.1 / DSM 467 / LMG 4362 / NCIMB 8255 / S1)).